Here is a 295-residue protein sequence, read N- to C-terminus: Phosphatidylglycerol--prolipoprotein diacylglyceryl transferase (295 aa).

7 helical membrane-spanning segments follow: residues 17–37 (IKVH…WLLG), 57–77 (LLFY…MLFY), 92–112 (VWDG…ACWW), 127–147 (FMAP…FIGA), 196–216 (QLYE…AVSA), 222–242 (YLVG…VEFV), and 255–275 (WLTR…VLLV). Residue Arg140 participates in a 1,2-diacyl-sn-glycero-3-phospho-(1'-sn-glycerol) binding.

It belongs to the Lgt family.

Its subcellular location is the cell inner membrane. It catalyses the reaction L-cysteinyl-[prolipoprotein] + a 1,2-diacyl-sn-glycero-3-phospho-(1'-sn-glycerol) = an S-1,2-diacyl-sn-glyceryl-L-cysteinyl-[prolipoprotein] + sn-glycerol 1-phosphate + H(+). It functions in the pathway protein modification; lipoprotein biosynthesis (diacylglyceryl transfer). Catalyzes the transfer of the diacylglyceryl group from phosphatidylglycerol to the sulfhydryl group of the N-terminal cysteine of a prolipoprotein, the first step in the formation of mature lipoproteins. The protein is Phosphatidylglycerol--prolipoprotein diacylglyceryl transferase of Stenotrophomonas maltophilia (strain R551-3).